We begin with the raw amino-acid sequence, 316 residues long: L-lactate dehydrogenase 3 (316 aa).

4 residues coordinate NAD(+): V16, D37, R42, and Y68. Residue R91 coordinates substrate. NAD(+) contacts are provided by residues S104, 121–123 (ASN), and T146. 123-126 (NPVD) is a substrate binding site. Residue 151–154 (DSSR) participates in substrate binding. 2 residues coordinate beta-D-fructose 1,6-bisphosphate: R156 and H171. The active-site Proton acceptor is H178. T233 is a binding site for substrate.

The protein belongs to the LDH/MDH superfamily. LDH family. In terms of assembly, homotetramer.

Its subcellular location is the cytoplasm. It catalyses the reaction (S)-lactate + NAD(+) = pyruvate + NADH + H(+). The protein operates within fermentation; pyruvate fermentation to lactate; (S)-lactate from pyruvate: step 1/1. Its activity is regulated as follows. Allosterically activated by fructose 1,6-bisphosphate (FBP). Functionally, catalyzes the conversion of lactate to pyruvate. The protein is L-lactate dehydrogenase 3 of Bacillus cereus (strain ATCC 10987 / NRS 248).